Here is a 221-residue protein sequence, read N- to C-terminus: Glutathione S-transferase A3 (221 aa).

A2 is subject to N-acetylalanine. Residues 3 to 83 (GKPVLHYFDG…YIASKYNLYG (81 aa)) form the GST N-terminal domain. At K4 the chain carries N6-succinyllysine. Residues Y9, R45, 54–55 (QV), and 67–68 (QT) contribute to the glutathione site. Positions 85–207 (DMKERAIIDM…LQPGSQRKPF (123 aa)) constitute a GST C-terminal domain.

Homodimer.

Its subcellular location is the cytoplasm. The enzyme catalyses RX + glutathione = an S-substituted glutathione + a halide anion + H(+). The catalysed reaction is androst-5-ene-3,17-dione = androst-4-ene-3,17-dione. It carries out the reaction pregn-5-ene-3,20-dione = progesterone. Conjugation of reduced glutathione to a wide number of exogenous and endogenous hydrophobic electrophiles. Catalyzes isomerization reactions that contribute to the biosynthesis of steroid hormones. Efficiently catalyze obligatory double-bond isomerizations of delta(5)-androstene-3,17-dione and delta(5)-pregnene-3,20-dione, precursors to testosterone and progesterone, respectively. Has a high catalytic activity for aflatoxin B1-8,9 epoxide. In Mus musculus (Mouse), this protein is Glutathione S-transferase A3.